Here is a 428-residue protein sequence, read N- to C-terminus: Glutamate-1-semialdehyde 2,1-aminomutase (428 aa).

K265 is modified (N6-(pyridoxal phosphate)lysine).

It belongs to the class-III pyridoxal-phosphate-dependent aminotransferase family. HemL subfamily. As to quaternary structure, homodimer. Pyridoxal 5'-phosphate serves as cofactor.

It is found in the cytoplasm. The catalysed reaction is (S)-4-amino-5-oxopentanoate = 5-aminolevulinate. It functions in the pathway porphyrin-containing compound metabolism; protoporphyrin-IX biosynthesis; 5-aminolevulinate from L-glutamyl-tRNA(Glu): step 2/2. In Shewanella sediminis (strain HAW-EB3), this protein is Glutamate-1-semialdehyde 2,1-aminomutase.